The sequence spans 146 residues: Cytidine deaminase (146 aa).

A CMP/dCMP-type deaminase domain is found at 13–140 (ECVQQLLVCS…ELLPSSFGPE (128 aa)). Residue 54–60 (NIENACY) coordinates substrate. Residue Cys-65 coordinates Zn(2+). The active-site Proton donor is Glu-67. Cys-99 and Cys-102 together coordinate Zn(2+).

The protein belongs to the cytidine and deoxycytidylate deaminase family. As to quaternary structure, homotetramer. The cofactor is Zn(2+). Highly expressed in granulocytes while expression is very low in fibroblasts, chondrocytes, monocytes, and T- as well as B-cell lines.

The enzyme catalyses cytidine + H2O + H(+) = uridine + NH4(+). It catalyses the reaction 2'-deoxycytidine + H2O + H(+) = 2'-deoxyuridine + NH4(+). Functionally, this enzyme scavenges exogenous and endogenous cytidine and 2'-deoxycytidine for UMP synthesis. The chain is Cytidine deaminase from Homo sapiens (Human).